We begin with the raw amino-acid sequence, 181 residues long: Large ribosomal subunit protein uL5c (181 aa).

It belongs to the universal ribosomal protein uL5 family. As to quaternary structure, part of the 50S ribosomal subunit; contacts the 5S rRNA.

It localises to the plastid. It is found in the chloroplast. In terms of biological role, binds 5S rRNA, forms part of the central protuberance of the 50S subunit. The sequence is that of Large ribosomal subunit protein uL5c (rpl5) from Pyropia yezoensis (Susabi-nori).